The sequence spans 118 residues: Large ribosomal subunit protein uL18 (118 aa).

This sequence belongs to the universal ribosomal protein uL18 family. Part of the 50S ribosomal subunit; part of the 5S rRNA/L5/L18/L25 subcomplex. Contacts the 5S and 23S rRNAs.

Functionally, this is one of the proteins that bind and probably mediate the attachment of the 5S RNA into the large ribosomal subunit, where it forms part of the central protuberance. The polypeptide is Large ribosomal subunit protein uL18 (Dichelobacter nodosus (strain VCS1703A)).